The sequence spans 374 residues: Chaperone protein DnaJ (374 aa).

In terms of domain architecture, J spans 5 to 70 (DYYEVLGISR…SKRAAYDQFG (66 aa)). The segment at 129–207 (GKTVKINIPG…CHGQGRVRQE (79 aa)) adopts a CR-type zinc-finger fold. Cysteine 142, cysteine 145, cysteine 159, cysteine 162, cysteine 181, cysteine 184, cysteine 195, and cysteine 198 together coordinate Zn(2+). 4 CXXCXGXG motif repeats span residues 142-149 (CEACDGSG), 159-166 (CGTCQGMG), 181-188 (CPTCRGSG), and 195-202 (CKSCHGQG). The disordered stretch occupies residues 216 to 238 (PGVDTGDRIRLSGEGEMGVDGGP).

This sequence belongs to the DnaJ family. In terms of assembly, homodimer. Requires Zn(2+) as cofactor.

The protein resides in the cytoplasm. In terms of biological role, participates actively in the response to hyperosmotic and heat shock by preventing the aggregation of stress-denatured proteins and by disaggregating proteins, also in an autonomous, DnaK-independent fashion. Unfolded proteins bind initially to DnaJ; upon interaction with the DnaJ-bound protein, DnaK hydrolyzes its bound ATP, resulting in the formation of a stable complex. GrpE releases ADP from DnaK; ATP binding to DnaK triggers the release of the substrate protein, thus completing the reaction cycle. Several rounds of ATP-dependent interactions between DnaJ, DnaK and GrpE are required for fully efficient folding. Also involved, together with DnaK and GrpE, in the DNA replication of plasmids through activation of initiation proteins. The sequence is that of Chaperone protein DnaJ from Marinobacter nauticus (strain ATCC 700491 / DSM 11845 / VT8) (Marinobacter aquaeolei).